The chain runs to 46 residues: MAKGKFERSKPHVNVGTIGHVDHGKTTLTAALTTILAEKFGGQAKA.

Residues 1 to 10 (MAKGKFERSK) are compositionally biased toward basic and acidic residues. The segment at 1–20 (MAKGKFERSKPHVNVGTIGH) is disordered. Residue 19-26 (GHVDHGKT) participates in GTP binding.

Belongs to the GTP-binding elongation factor family. EF-Tu/EF-1A subfamily. As to quaternary structure, monomer.

It localises to the cytoplasm. This protein promotes the GTP-dependent binding of aminoacyl-tRNA to the A-site of ribosomes during protein biosynthesis. This is Elongation factor Tu (tufA) from Eikenella corrodens.